We begin with the raw amino-acid sequence, 150 residues long: Small heat shock protein IbpB (150 aa).

In terms of domain architecture, sHSP spans 26–137; that stretch reads SQEPIDFPPY…QPQRIAIGGG (112 aa).

Belongs to the small heat shock protein (HSP20) family. As to quaternary structure, homodimer. Forms homomultimers of about 100-150 subunits at optimal growth temperatures. Conformation changes to oligomers at high temperatures or high ionic concentrations. The decrease in size of the multimers is accompanied by an increase in chaperone activity.

The protein resides in the cytoplasm. In terms of biological role, associates with aggregated proteins, together with IbpA, to stabilize and protect them from irreversible denaturation and extensive proteolysis during heat shock and oxidative stress. Aggregated proteins bound to the IbpAB complex are more efficiently refolded and reactivated by the ATP-dependent chaperone systems ClpB and DnaK/DnaJ/GrpE. Its activity is ATP-independent. The polypeptide is Small heat shock protein IbpB (Pectobacterium atrosepticum (strain SCRI 1043 / ATCC BAA-672) (Erwinia carotovora subsp. atroseptica)).